Here is a 504-residue protein sequence, read N- to C-terminus: Alpha-L-arabinofuranosidase C (504 aa).

N-linked (GlcNAc...) asparagine glycosylation is found at Asn-81, Asn-152, Asn-269, and Asn-329.

This sequence belongs to the glycosyl hydrolase 51 family.

It localises to the secreted. The catalysed reaction is Hydrolysis of terminal non-reducing alpha-L-arabinofuranoside residues in alpha-L-arabinosides.. It functions in the pathway glycan metabolism; L-arabinan degradation. Functionally, alpha-L-arabinofuranosidase involved in the degradation of arabinoxylan, a major component of plant hemicellulose. Acts only on small linear 1,5-alpha-linked L-arabinofuranosyl oligosaccharides. The polypeptide is Alpha-L-arabinofuranosidase C (abfC) (Emericella nidulans (strain FGSC A4 / ATCC 38163 / CBS 112.46 / NRRL 194 / M139) (Aspergillus nidulans)).